Reading from the N-terminus, the 322-residue chain is Putative integrase ORF3 (322 aa).

The Integrase catalytic domain occupies 153–322 (RGKLTDFKSI…SSKEMFLQNI (170 aa)).

The protein belongs to the plectrovirus integrase ORF3 family.

In terms of biological role, this protein may encode an integrase, which is necessary for integration of the viral DNA into host genome. This is Putative integrase ORF3 from Spiroplasma virus SpV1-R8A2 B (SpV1).